Consider the following 378-residue polypeptide: Interleukin-3 receptor subunit alpha (378 aa).

The first 18 residues, 1 to 18 (MVLLWLTLLLIALPCLLQ), serve as a signal peptide directing secretion. Over 19–305 (TKEDPNPPIT…EEGANTRAWR (287 aa)) the chain is Extracellular. N-linked (GlcNAc...) asparagine glycosylation is found at N46, N64, N80, and N109. 4 disulfides stabilise this stretch: C52–C68, C76–C195, C112–C122, and C151–C165. Residues N212 and N218 are each glycosylated (N-linked (GlcNAc...) asparagine). The cysteines at positions 217 and 293 are disulfide-linked. A WSXWS motif motif is present at residues 282 to 286 (LSAWS). Residues 306 to 325 (TSLLIALGTLLALVCVFVIC) traverse the membrane as a helical segment. Over 326–378 (RRYLVMQRLFPRIPHMKDPIGDSFQNDKLVVWEAGKAGLEECLVTEVQVVQKT) the chain is Cytoplasmic. A Box 1 motif motif is present at residues 334–342 (LFPRIPHMK).

Belongs to the type I cytokine receptor family. Type 5 subfamily. Interacts with IL3. Heterodimer of an alpha and a beta subunit. The beta subunit is common to the IL3, IL5 and GM-CSF receptors. Ubiquitinated by RNFT2 in response to IL3. Ubiquitination leads ligand-induced degradation by the proteasome. Ubiquitinated by RNF128 via 'Lys-27'-linked polyubiquitination, facilitating its degradation through the lysosomal pathway.

It localises to the cell membrane. In terms of biological role, cell surface receptor for IL3 expressed on hematopoietic progenitor cells, monocytes and B-lymphocytes that controls the production and differentiation of hematopoietic progenitor cells into lineage-restricted cells. Ligand stimulation rapidly induces hetrodimerization with IL3RB, phosphorylation and enzyme activity of effector proteins such as JAK2 and PI3K that play a role in signaling cell proliferation and differentiation. Activation of JAK2 leads to STAT5-mediated transcriptional program. The protein is Interleukin-3 receptor subunit alpha of Homo sapiens (Human).